Reading from the N-terminus, the 332-residue chain is L-lactate dehydrogenase C chain (332 aa).

S2 bears the Blocked amino end (Ser) mark. NAD(+) is bound by residues 29-57 (GNVGMACAISILLKGLADELALVDADTNK) and R99. Positions 106, 138, and 169 each coordinate substrate. N138 contacts NAD(+). The active-site Proton acceptor is H193. Residue T248 participates in substrate binding.

This sequence belongs to the LDH/MDH superfamily. LDH family. As to quaternary structure, homotetramer. Interacts with RABL2/RABL2A; binds preferentially to GTP-bound RABL2. As to expression, expressed within the midpiece of sperm tail (at protein level).

The protein localises to the cytoplasm. The catalysed reaction is (S)-lactate + NAD(+) = pyruvate + NADH + H(+). It participates in fermentation; pyruvate fermentation to lactate; (S)-lactate from pyruvate: step 1/1. Its function is as follows. Possible role in sperm motility. In Mus musculus (Mouse), this protein is L-lactate dehydrogenase C chain (Ldhc).